The sequence spans 1325 residues: ATP-binding cassette sub-family C member 4 (1325 aa).

A run of 6 helical transmembrane segments spans residues 93 to 113 (LILG…PLFL), 136 to 156 (GYAA…HLYF), 205 to 225 (FDQV…AIAV), 227 to 247 (VLLW…LVIL), 322 to 342 (ASFF…YVLL), and 351 to 371 (VFVA…FFPS). The region spanning 93–377 (LILGIFTLIE…FFPSAIERGS (285 aa)) is the ABC transmembrane type-1 1 domain. One can recognise an ABC transporter 1 domain in the interval 410-633 (VHVQDFTAFW…GVDFGSLLKK (224 aa)). 445 to 452 (GPVGAGKS) is a binding site for ATP. 2 positions are modified to phosphothreonine: T646 and T648. A compositionally biased stretch (polar residues) spans 657–667 (ASIWSQQSSRP). Positions 657 to 690 (ASIWSQQSSRPSLKDGAPEGQDAENTQAVQPEES) are disordered. 2 positions are modified to phosphoserine: S664 and S668. The next 5 helical transmembrane spans lie at 710 to 730 (SWFF…FYVL), 761 to 781 (LSWY…FGIA), 849 to 869 (LVVS…IPLV), 954 to 974 (AICA…AKTL), and 977 to 997 (GQVG…QWSV). An ABC transmembrane type-1 2 domain is found at 714–1005 (IIFLVLLNMV…SVRQSAEVEN (292 aa)). The ABC transporter 2 domain occupies 1041–1274 (IVFDNVNFTY…PESLFYKMVQ (234 aa)). 1075 to 1082 (GRTGAGKS) provides a ligand contact to ATP. Residues 1322 to 1325 (ETAL) carry the PDZ-binding motif.

In terms of assembly, interacts (via PDZ-binding motif) with SNX27 (via PDZ domain); this interaction accelerates MRP4 internalization. Requires Mg(2+) as cofactor. Post-translationally, N-glycosylated; leading to substrate-selective effects on its transport activity.

It is found in the basolateral cell membrane. The protein resides in the apical cell membrane. It carries out the reaction ATP + H2O + xenobioticSide 1 = ADP + phosphate + xenobioticSide 2.. The enzyme catalyses an S-substituted glutathione(in) + ATP + H2O = an S-substituted glutathione(out) + ADP + phosphate + H(+). The catalysed reaction is 17beta-estradiol 17-O-(beta-D-glucuronate)(in) + ATP + H2O = 17beta-estradiol 17-O-(beta-D-glucuronate)(out) + ADP + phosphate + H(+). It catalyses the reaction dehydroepiandrosterone 3-sulfate(in) + ATP + H2O = dehydroepiandrosterone 3-sulfate(out) + ADP + phosphate + H(+). It carries out the reaction leukotriene C4(in) + ATP + H2O = leukotriene C4(out) + ADP + phosphate + H(+). The enzyme catalyses leukotriene B4(in) + ATP + H2O = leukotriene B4(out) + ADP + phosphate + H(+). The catalysed reaction is urate(in) + ATP + H2O = urate(out) + ADP + phosphate + H(+). It catalyses the reaction 3',5'-cyclic GMP(in) + ATP + H2O = 3',5'-cyclic GMP(out) + ADP + phosphate + H(+). It carries out the reaction 3',5'-cyclic AMP(in) + ATP + H2O = 3',5'-cyclic AMP(out) + ADP + phosphate + H(+). The enzyme catalyses prostaglandin E2(in) + ATP + H2O = prostaglandin E2(out) + ADP + phosphate + H(+). The catalysed reaction is prostaglandin E1(in) + ATP + H2O = prostaglandin E1(out) + ADP + phosphate + H(+). It catalyses the reaction glycodeoxycholate(in) + glutathione(in) + ATP + H2O = glycodeoxycholate(out) + glutathione(out) + ADP + phosphate + H(+). It carries out the reaction cholate(in) + glutathione(in) + ATP + H2O = cholate(out) + glutathione(out) + ADP + phosphate + H(+). The enzyme catalyses glycocholate(in) + glutathione(in) + ATP + H2O = glycocholate(out) + glutathione(out) + ADP + phosphate + H(+). The catalysed reaction is taurocholate(in) + glutathione(in) + ATP + H2O = taurocholate(out) + glutathione(out) + ADP + phosphate + H(+). It catalyses the reaction glycochenodeoxycholate(in) + glutathione(in) + ATP + H2O = glycochenodeoxycholate(out) + glutathione(out) + ADP + phosphate + H(+). It carries out the reaction taurochenodeoxycholate(in) + glutathione(in) + ATP + H2O = taurochenodeoxycholate(out) + glutathione(out) + ADP + phosphate + H(+). The enzyme catalyses glycoursodeoxycholate(in) + glutathione(in) + ATP + H2O = glycoursodeoxycholate(out) + glutathione(out) + ADP + phosphate + H(+). The catalysed reaction is tauroursodeoxycholate(in) + glutathione(in) + ATP + H2O = tauroursodeoxycholate(out) + glutathione(out) + ADP + phosphate + H(+). Its function is as follows. ATP-dependent transporter of the ATP-binding cassette (ABC) family that actively extrudes physiological compounds and xenobiotics from cells. Transports a range of endogenous molecules that have a key role in cellular communication and signaling, including cyclic nucleotides such as cyclic AMP (cAMP) and cyclic GMP (cGMP), bile acids, steroid conjugates, urate, and prostaglandins. Also mediates the ATP-dependent efflux of glutathione conjugates such as leukotriene C4 (LTC4) and leukotriene B4 (LTB4). The presence of GSH is necessary for the ATP-dependent transport of LTB4, whereas GSH is not required for the transport of LTC4. Mediates the cotransport of bile acids with reduced glutathione (GSH). Transports a wide range of drugs and their metabolites, including anticancer, antiviral and antibiotics molecules. Confers resistance to anticancer agents. In Mus musculus (Mouse), this protein is ATP-binding cassette sub-family C member 4.